A 269-amino-acid polypeptide reads, in one-letter code: Regulating synaptic membrane exocytosis protein 4 (269 aa).

The C2 domain occupies Pro115–Tyr233. A phosphoserine mark is found at Ser254 and Ser257.

Binds PPFIA3. Does not bind RAB3.

Its subcellular location is the synapse. Its function is as follows. Regulates synaptic membrane exocytosis. The protein is Regulating synaptic membrane exocytosis protein 4 (RIMS4) of Homo sapiens (Human).